Reading from the N-terminus, the 400-residue chain is tRNA (guanine-N(7)-)-methyltransferase (400 aa).

S-adenosyl-L-methionine is bound by residues Glu124, Glu149, and Asp176. Residue Asp232 participates in substrate binding.

Belongs to the class I-like SAM-binding methyltransferase superfamily. TrmB family.

The catalysed reaction is guanosine(46) in tRNA + S-adenosyl-L-methionine = N(7)-methylguanosine(46) in tRNA + S-adenosyl-L-homocysteine. It participates in tRNA modification; N(7)-methylguanine-tRNA biosynthesis. In terms of biological role, catalyzes the formation of N(7)-methylguanine at position 46 (m7G46) in tRNA. The protein is tRNA (guanine-N(7)-)-methyltransferase of Helicobacter pylori (strain J99 / ATCC 700824) (Campylobacter pylori J99).